An 89-amino-acid polypeptide reads, in one-letter code: Large ribosomal subunit protein uL29 (89 aa).

Belongs to the universal ribosomal protein uL29 family.

The protein is Large ribosomal subunit protein uL29 of Frankia alni (strain DSM 45986 / CECT 9034 / ACN14a).